The primary structure comprises 112 residues: NADH-quinone oxidoreductase subunit K (112 aa).

3 helical membrane-spanning segments follow: residues 14 to 34 (LEGY…GALI), 39 to 59 (VVVF…LVAF), and 76 to 96 (LIIA…LAIF).

It belongs to the complex I subunit 4L family. NDH-1 is composed of 14 different subunits. Subunits NuoA, H, J, K, L, M, N constitute the membrane sector of the complex.

The protein resides in the cell membrane. The enzyme catalyses a quinone + NADH + 5 H(+)(in) = a quinol + NAD(+) + 4 H(+)(out). NDH-1 shuttles electrons from NADH, via FMN and iron-sulfur (Fe-S) centers, to quinones in the respiratory chain. The immediate electron acceptor for the enzyme in this species is believed to be a menaquinone. Couples the redox reaction to proton translocation (for every two electrons transferred, four hydrogen ions are translocated across the cytoplasmic membrane), and thus conserves the redox energy in a proton gradient. This is NADH-quinone oxidoreductase subunit K from Rubrobacter xylanophilus (strain DSM 9941 / JCM 11954 / NBRC 16129 / PRD-1).